Here is a 577-residue protein sequence, read N- to C-terminus: Arginine--tRNA ligase (577 aa).

The 'HIGH' region signature appears at 122–132 (PNVAKEMHVGH).

The protein belongs to the class-I aminoacyl-tRNA synthetase family. Monomer.

It is found in the cytoplasm. The enzyme catalyses tRNA(Arg) + L-arginine + ATP = L-arginyl-tRNA(Arg) + AMP + diphosphate. In Salmonella gallinarum (strain 287/91 / NCTC 13346), this protein is Arginine--tRNA ligase.